We begin with the raw amino-acid sequence, 872 residues long: Potassium voltage-gated channel subfamily KQT member 3 (872 aa).

A disordered region spans residues 1-43 (MGLKARRAAGAAGGGGDGGGGGGGAANPAGGDAAAAGDEERKV). Over 1–120 (MGLKARRAAG…IYDALERPRG (120 aa)) the chain is Cytoplasmic. The span at 11–25 (AAGGGGDGGGGGGGA) shows a compositional bias: gly residues. The segment covering 26 to 36 (ANPAGGDAAAA) has biased composition (low complexity). T81 carries the phosphothreonine modification. Residues 121–143 (WALLYHALVFLIVLGCLILAVLT) traverse the membrane as a helical segment. The Extracellular segment spans residues 144–153 (TFKEYETVSG). A helical transmembrane segment spans residues 154–175 (DWLLLLETFAIFIFGAEFALRI). Over 176-193 (WAAGCCCRYKGWRGRLKF) the chain is Cytoplasmic. The helical transmembrane segment at 194–213 (ARKPLCMLDIFVLIASVPVV) threads the bilayer. The Extracellular segment spans residues 214 to 225 (AVGNQGNVLATS). Residues 226–244 (LRSLRFLQILRMLRMDRRG) traverse the membrane as a helical; Voltage-sensor segment. R243 provides a ligand contact to a 1,2-diacyl-sn-glycero-3-phospho-(1D-myo-inositol-4,5-bisphosphate). The Cytoplasmic segment spans residues 245 to 256 (GTWKLLGSAICA). T246 bears the Phosphothreonine mark. The helical transmembrane segment at 257–282 (HSKELITAWYIGFLTLILSSFLVYLV) threads the bilayer. K259 contacts a 1,2-diacyl-sn-glycero-3-phospho-(1D-myo-inositol-4,5-bisphosphate). At 283-302 (EKDVPEVDAQGEEMKEEFET) the chain is on the extracellular side. Residues 303–315 (YADALWWGLITLA) constitute an intramembrane region (pore-forming). Positions 316–321 (TIGYGD) match the Selectivity filter motif. The Extracellular portion of the chain corresponds to 316-326 (TIGYGDKTPKT). Residues 327–353 (WEGRLIAATFSLIGVSFFALPAGILGS) traverse the membrane as a helical segment. Over 354-872 (GLALKVQEQH…SVWTPSNKPI (519 aa)) the chain is Cytoplasmic. Residues 356–537 (ALKVQEQHRQ…RLYKKKFKET (182 aa)) form a mediates interaction with calmodulin region. Residue K366 participates in a 1,2-diacyl-sn-glycero-3-phospho-(1D-myo-inositol-4,5-bisphosphate) binding. 2 disordered regions span residues 575–611 (GPPS…PSTS) and 764–872 (ADLQ…NKPI). Polar residues-rich tracts occupy residues 587 to 600 (KGSA…QSPR) and 843 to 872 (DPFT…NKPI).

The protein belongs to the potassium channel family. KQT (TC 1.A.1.15) subfamily. Kv7.3/KCNQ3 sub-subfamily. In terms of assembly, heterotetramer with KCNQ2; forms heterotetrameric native M-channel responsible for the M-current. Interacts with calmodulin; the interaction is calcium-independent, constitutive and participates in the proper assembly of a functional M-channel. Heteromultimer with KCNQ5. May associate with KCNE2. Interacts with IQCJ-SCHIP1. Interacts (via the pore module) with SLC5A3/SMIT1; forms a coregulatory complex that alters ion selectivity, voltage dependence and gating kinetics of the channel. In terms of processing, KCNQ2/KCNQ3 are ubiquitinated by NEDD4L. Ubiquitination leads to protein degradation. Degradation induced by NEDD4L is inhibited by USP36. In terms of tissue distribution, predominantly expressed in brain.

The protein localises to the cell membrane. The catalysed reaction is K(+)(in) = K(+)(out). It carries out the reaction Rb(+)(in) = Rb(+)(out). The enzyme catalyses Cs(+)(in) = Cs(+)(out). It catalyses the reaction Na(+)(in) = Na(+)(out). Its activity is regulated as follows. Phosphatidylinositol-4,5-bisphosphate (PIP2) potentiates the activation of KCNQ channels by enhancing the electro-mechanical coupling of the voltage-sensing domain (VSD) and the pore-forming domain (PD). In the closed state of the channel, PIP2 is anchored at the S2-S3 loop; upon channel activation, PIP2 interacts with the S4-S5 linker and is involved in channel gating. Calcium suppresses KCNQ2-KCNQ3 channel currents, with calcium-bound calmodulin inducing a change in channel configuration which leads to the reduction of channel affinity for PIP2 and subsequent current suppression. M-channel is activated by the anticonvulsant retigabine. Pore-forming subunit of the voltage-gated potassium (Kv) M-channel which is responsible for the M-current, a key controller of neuronal excitability. M-channel is composed of pore-forming subunits KCNQ2 and KCNQ3 assembled as heterotetramers. The native M-current has a slowly activating and deactivating potassium conductance which plays a critical role in determining the subthreshold electrical excitability of neurons as well as the responsiveness to synaptic inputs. M-channel is selectively permeable in vitro to other cations besides potassium, in decreasing order of affinity K(+) &gt; Rb(+) &gt; Cs(+) &gt; Na(+). M-channel association with SLC5A3/SMIT1 alters channel ion selectivity, increasing Na(+) and Cs(+) permeation relative to K(+). Suppressed by activation of M1 muscarinic acetylcholine receptors. KCNQ3 also associates with KCNQ5 to form a functional channel in vitro and may also contribute to the M-current in brain. This is Potassium voltage-gated channel subfamily KQT member 3 from Homo sapiens (Human).